The following is a 63-amino-acid chain: Anionic peptide NDBP7 (63 aa).

Positions 1-20 (MISRFCLLFLLVFVVSKIQA) are cleaved as a signal peptide.

This sequence belongs to the non-disulfide-bridged peptide (NDBP) superfamily. Long chain multifunctional peptide (group 2) family. Expressed by the venom gland.

Its subcellular location is the secreted. In Lychas mucronatus (Chinese swimming scorpion), this protein is Anionic peptide NDBP7.